A 390-amino-acid chain; its full sequence is Ribonucleoside-diphosphate reductase subunit M2 (390 aa).

A Phosphoserine modification is found at Ser20. Thr33 is subject to Phosphothreonine. Positions 49–51 (RRI) match the Cy motif. Fe cation is bound by residues Asp139, Glu170, and His173. The active site involves Tyr177. Glu233, Glu267, and His270 together coordinate Fe cation.

The protein belongs to the ribonucleoside diphosphate reductase small chain family. Heterodimer of a large and a small subunit. Interacts (via Cy motif and when phosphorylated at Thr-33) with CCNF; the interaction occurs exclusively in G2 and early M. Requires Fe cation as cofactor. In terms of processing, phosphorylation on Ser-20 relieves the inhibitory effect on Wnt signaling. Phosphorylated on Thr-33 by CDK1 and CDK2; predominantly in G2 and M phase. Post-translationally, ubiquitinated by the SCF(CCNF) E3 ubiquitin-protein ligase complex; leading to its degradation by the proteasome.

It is found in the cytoplasm. The protein resides in the nucleus. The enzyme catalyses a 2'-deoxyribonucleoside 5'-diphosphate + [thioredoxin]-disulfide + H2O = a ribonucleoside 5'-diphosphate + [thioredoxin]-dithiol. Provides the precursors necessary for DNA synthesis. Catalyzes the biosynthesis of deoxyribonucleotides from the corresponding ribonucleotides. Inhibits Wnt signaling. The sequence is that of Ribonucleoside-diphosphate reductase subunit M2 (Rrm2) from Rattus norvegicus (Rat).